The primary structure comprises 334 residues: WD repeat-containing protein 54 (334 aa).

WD repeat units follow at residues G162–T206, I208–Q247, and A250–Y289.

As to quaternary structure, homodimer and homotrimer; forms tight forms of dimers and trimers. Interacts with IZUMO1 and IZUMO1R/JUNO. In terms of processing, cross-linked to tightly form both dimers and trimers by TGM2. Cross-linking enhances the activation of EGF receptor-mediated signaling pathway. Cross-linking is inhibited by EGF. Ubiquitinated. EGF increases ubiquitination. In terms of tissue distribution, expressed in epithelial cells (at protein level). Isoform 3 expression is highly increased in colorectal cancer cells.

Its subcellular location is the vesicle. It localises to the cytoplasm. The protein localises to the cell membrane. Functionally, plays a role in the adhesion and fusion of the sperm-oocyte membrane through its interactions with IZUMO1 and IZUMO1R/JUNO. When cross-linked to form dimers and trimers, it has a regulatory effect on ERK signaling pathway activity in response to EGF stimulation. Colocalizes with the EGF receptor in WDR54-specific vesicle where it sustains the internalization and controls the degradation of the EGF receptor after EGF stimulation. The polypeptide is WD repeat-containing protein 54 (Homo sapiens (Human)).